We begin with the raw amino-acid sequence, 5430 residues long: MSSSDEETLSERSCRSERSCRSERSYRSERSGSLSPCPPGDTLPWNLPLHEQKKRKSQDSVLDPAERAVVRVADERDRVQKKTFTKWVNKHLMKVRKHINDLYEDLRDGHNLISLLEVLSGIKLPREKGRMRFHRLQNVQIALDFLKQRQVKLVNIRNDDITDGNPKLTLGLIWTIILHFQISDIYISGESGDMSAKEKLLLWTQKVTAGYTGIKCTNFSSCWSDGKMFNALIHRYRPDLVDMERVQIQSNRENLEQAFEVAERLGVTRLLDAEDVDVPSPDEKSVITYVSSIYDAFPKVPEGGEGISATEVDSRWQEYQSRVDSLIPWIRQHTILMSDKSFPQNPVELKALYNQYIHFKETEILAKEREKGRIKELYKLLEVWIEFGRIKLPQGYHPNHVEEEWGKLIVEMLEREKSLRPAVERLELLLQIANKIQNGALNCEEKLTLAKNTLQADAAHLESGQPVQCESDVIMYIQECEGLIRQLQVDLQILRDEKYYQLEELAFRVMRLQDELVTLRLECTNLYRKGHFTSLELVPPSTLTTTHLKAEPLNKTTHSSSTSWFRKPMTRTELVAISSSEDEGSLRFVYELLSWVEEMQMKLERAEWGNDLPSVELQWETQQHIHTSVEELGSSVKEARLYEGKMSQNFHTSYVETLGKLETQYCKLKETSSFRMRHLQSLHKFVSKATAELIWLNGKEEEELACDWSDSNPNISAKKAYFSELTMELEGKQDVFRSLQDTAELLSLENHPAKQTVEAYSAAVQSQLQWMKQLCLCVEQHIKENAAYFQFFSDARDLESFLRNLQDSIKRKYTCDHNTSLSRLEDLLQDSMDEKEQLIQSKSSVASLVGRSKTIVQLKPRNPDHVLKSTLSVKAICDYRQIEITICKNDECVLEDNSQRTKWKVISPTGNEAMVPSVCLLIPPPNTEAIDVASRVEQSYQKVMALWHQLHINTKSLISWNYLRKDIDAVQTWNLEKLRSSAPGECHQVMKNLQAHYEDFLQDSHDSALFSVADRLRIEEEVEACKTHFQQLMESMENEDKEETLAKVYISELKNIRLRLEECEQRLLKQIQSSASSKTDRDARQDVALRIAEQEHVQEDLKHLRSDLDAVSVKCTTFLQQSPSGSSATTLRSELNLMVEKMDHVYGLSIVCLNKLKTIDVIVRSIQDAELLVKGYEIKLSQEEAVPADLSALESHRTTLQHWLSDVKDKNSVFSVLDEEISKAKAVAEQLHHRAAEPNLDLERYQEKGSQLQERWHRVIAQLETRQSEVESIQEVLRDYRACHGTLIKWIEETTAQQEMMKPGQAEDSRVLSEQLSQQTELFAEIERNQTKLDQCQKLSQQYSTTVKDYELQLMTYKAFVESQQKSPGKRRRMISSSDAITQEFMDLRTRYTALVTLTTQHVKYISDALRRLEEEEKVVEEEKQEHVEKVKDLLGWVSTLARNTQGTTTSSRTSASTDIEKAILEQQVLAEELTTKKEQVSEAIKTSQIFLAKHGHKLSEREKEQISEQLCALNKTYHDLCDGSANQLQQLQSELAQQTEQKTLQKQQDTCHKKLEDLRSWVRQAERALERHRGRASQQELSALQQNQSDLKDLQGDIQNHSTSFATAVKDIEGFLEENQNKLSPQELTALREKLYQAKEQYEGLQDRTREAQKELEEAVTSALQQETEKSKAATELAENRRKIDALLDWVTSVGSSDRQPQTSLPGTEQFSGACLEKQTLDATDGCVDVNQVPEKLDRQYELMKARHQELLSQQQNFIVATQSAQSFLDQHSHNLTPEERQMLQEKLGELKEQYAASLAQSEAKLRQTQTLRDELQKFLQDHREFENWLERSENELDGMHTGGSSPEALNSLLKRQGSFSEDVISHKGDLRFVTISGQKVLETENNFEEGQEPSPTRNLVNEKLKDATERYTTLHSKCTRLGSHLNMLLGQYQQFQSSADSLQAWMLTCEASVEKLLSDTVASDPGILQQQLATTKQLQEELAEHQVPVEKLQKAAHDLMDIEGEPSLDCTPIRETTESIFSRFQSLSCSLAERSALLQKAIAQSQSVQESMESLLQSMKEVEQNLEGEQVAALSSGLIQEALANNMKLKQDIARQKSSLEATREMVTRFMETADGNSAAVLQDRLAELSQRFHRLQLQQQEKESGLKKLLPQAETFEQLSSKLQQFVEHKNRLLASGNQPDQDIAHFSQHIQELTLEMEDQKENLGTLEHLVTALGSCGFALDLSQHQEKIQNLKKDFTELQKTVQEREKDASNCQEQLDEFRKLIRTFQKWLKETEGNVPPAETFVSAKELEKQIEHLKGLLDDWAGKGVLVEEINTKGTALESLIMDITAPDSQAKTGSVLPSVGSSVGSVNGYHTCKDLTEIQCDMSDVNSKYDKLGDALRERQESLQTVLSRMEEVQKEASSVLQWLESKEEVLKGMDASLSPTKTETVKAQAESNKAFLAELEQNSPKIQKVKEALAGLLEAYPNSQEAENWRKMQEDLNSRWEKATEVTVARQKQLEESASHLACFQAAESQLRPWLMEKELMMGVLGPLSIDPNMLNAQKQQVQFMLKEFEARRQQHEQLTEAAQGILTGPGDVSPSASQVHKDLQSISQKWVELTDKLNSRSTQIDQAIVKSTQYQDLLQDLSEKVKAVGQRLSGQSAISTQPDAVKQQLEETSEIRSDLGQLDDEMKEAQTLCQELSLLIGEQYLKDELKKRLETVALPLQGLEDLAADRMNRLQAALASTQQFQQMFDELRTWLDEKQSQQAKNCPISAKLERLQSQLQENEEFQKNLNQHSGSYEVIVAEGESLLLSVPPGEEKKTLQNQLVELKSHWEDLNKKTVDRQSRLKDCMQKAQKYQWHVEDLVPWIKDCKSKMSELQVTLDPVQLESSLLRSKAMLNEAEKRRSLLEILNSAADILINSSEIDEDEIRDEKAGLNQNMDAITEELQAKTGSLEEMTQRLKEFQESFKNIEKKVEGAKHQLEIFDALGSQACSNKNLEKLKAQREVLQALDPQVDYLRDFTRGLVEDAPDGSDASPLVHQAELAQQEFLEVKQRVNSSCLTMENKLEGIGQFHCRVREMFSQLADLDDELDGMGAIGRDTDSLQSQIEDIRLFLNKIQALRLDIEDSEAECRKMLEEEGTLDLLGLKRELEALNKQCGKLTERGKARQEQLELTLGRVEDFYSKLKALNDAATAAEEGEALQWIVGTEVDVINQQLADFKMFQKEQVDPLQVKLQQVNGLGQGLIQSAGKTCDVQGLEHDMEEVNTRWNTLNKKVAQRIAQLQEALLHCGKFQDALEPLLSWLTDTEELIANQKPPSAEYKVVKAQIQEQKLLQRLLDDRKATVDMLQAEGGRIAQAAELADREKITGQLESLECRWTELLSKAAARQKQLEDILVLAKQFHETAEPISDFLSVTEKKLANSEPVGTQTAKIHQQIIRHKALEEEIENHAADVQQAVKIGQSLSSLICPAEQGIMSEKLDSLQARYSEIQDRCCRKASLLEQALFNARLFGEDEVEVLNWLAEVEDKLSAVFVKDYRQDVLQKQHADHLALNEEIINRKKNVDQAIKNGQALLKQTTGEEVLLIQEKLDGIKTRYADITVTSSKALRTLEQARQLATKFHSTYEELTGWLREVEEELAASGGQSPTGEQIPQFQQRQKELKKEVMEHRLVLDTVNEVSHALLELVPWRAREGLDKLVSDANEQYKLVSDTVGQRVDEIDAAIQRSQQYEQAADAELAWVAETKRKLMALGPIRLEQDQTTAQLQVQKAFSIDIIRHKDSMDELFSHRGEIFSTCGEEQKAVLQEKTECLIQQYEAVSLLNSERYARLERAQVLVNQFWETYEELSPWAEETLALIAQLPPPAVDHEQLRQQQEEMRQLRESIAEHKPHIDKILKIGPQLKELNPEEGKMVEEKYQKAENMYAQIKDEVRQRALALDEAVSQSAQIAEFHDKIEPMLETLENLSSRLRMPPLIPAEVDKIRECISDNKSATMELEKLQPSFEALKRRGEELIGRSQGADKDLAAKEIQDKLDQMVFFWEDIKARSEEREIKFLDVLELAEKFWYDMAALLTTIKDTQEIVHDLESPGIDPSIIKQQVEAAETIKEETDGLHEELEFIRILGADLIFACGETEKPEVKKSIDEMNNAWENLNRTWKERLEKLEDAMQAAVQYQDTLQAMFDWLDNTVIRLCTMPPVGTDLNTVKDQLNEMKEFKVEVYQQQIEMEKLNHQGELMLKKATDETDRDIIREPLTELKHLWENLGEKIAHRQHKLEGALLALGQFQHALEELMGWLTHTEELLDAQRPISGDPKVIEVELAKHHVLKNDVLAHQATVETVNKAGNELLESSAGDDASSLRSRLETMNQCWESVLQKTEEREQQLQSTLQQAQGFHSEIEEFLLELNRMESQLSASKPTGGLPETAREQLDAHMELHSQLRAKEEIYNQLLDKGRLMLLSRGDSGSGSKTEQSVALLEQKWHVVSSKVEERKSKLEEALSLATEFQNSLQEFINWLTLAEQSLNIASPPSLILNTVLSQIEEHKVFANEVNAHRDQIIELDQTGNQLKFLSQKQDVVLIKNLLVSVQSRWEKVVQRSIERGRSLDDARKRAKQFHEAWKKLIDWLEDAESHLDSELEISNDPDKIKLQLSKHKEFQKTLGGKQPVYDTTIRTGRALKEKTLLADDAQKLDNLLGEVRDKWDTVCGKSVERQHKLEEALLFSGQFMDALQALVDWLYKVEPQLAEDQPVHGDLDLVMNLMDAHKVFQKELGKRTGTVQVLKRSGRELIESSRDDTTWVKGQLQELSTRWDTVCKLSVSKQSRLEQALKQAEEFRDTVHMLLEWLSEAEQTLRFRGALPDDTEALQSLIDTHKEFMKKVEEKRVDVNAAVAMGEVILAVCHPDCITTIKHWITIIRARFEEVLTWAKQHQQRLETALSELVANAELLEELLAWIQWAETTLIQRDQEPIPQNIDRVKALITEHQSFMEEMTRKQPDVDRVTKTYKRKNIEPTHAPFIEKSRSGSRKSLNQPTPPPMPILSQSEAKNPRINQLSARWQQVWLLALERQRKLNDALDRLEELKEFANFDFDVWRKKYMRWMNHKKSRVMDFFRRIDKDQDGKITRQEFIDGILASKFPTTKLEMTAVADIFDRDGDGYIDYYEFVAALHPNKDAYRPTTDADKIEDEVTRQVAQCKCAKRFQVEQIGENKYRFGDSQQLRLVRILRSTVMVRVGGGWMALDEFLVKNDPCRARGRTNIELREKFILPEGASQGMTPFRSRGRRSKPSSRAASPTRSSSSASQSNHSCTSMPSSPATPASGTKVISSTGSKLKRPTPTFHSSRTSLAGDTSNSSSPASTGAKTNRADPKKSASRPGSRAGSRAGSRASSRRGSDASDFDLLETQSACSDTSESSAAGGQGSSRRGLTKPSKIPTMSKKTTTASPRTPCPKR.

Positions 1–47 (MSSSDEETLSERSCRSERSCRSERSYRSERSGSLSPCPPGDTLPWNL) are disordered. The tract at residues 1–295 (MSSSDEETLS…VITYVSSIYD (295 aa)) is actin-binding. Serine 4 bears the Phosphoserine mark. Residues 9–30 (LSERSCRSERSCRSERSYRSER) show a composition bias toward basic and acidic residues. Phosphoserine occurs at positions 35 and 57. 2 Calponin-homology (CH) domains span residues 78–181 (RVQK…LHFQ) and 194–298 (MSAK…DAFP). LRR repeat units lie at residues 148-171 (QRQV…LTLG) and 240-264 (LVDM…VAER). Serine 280 bears the Phosphoserine mark. LRR repeat units lie at residues 377–399 (LYKL…YHPN) and 441–464 (LNCE…LESG). The 58-residue stretch at 868-925 (KSTLSVKAICDYRQIEITICKNDECVLEDNSQRTKWKVISPTGNEAMVPSVCLLIPPP) folds into the SH3 domain. An LRR 5 repeat occupies 1050–1073 (ISELKNIRLRLEECEQRLLKQIQS). At serine 1122 the chain carries Phosphoserine. LRR repeat units follow at residues 1128-1154 (ATTL…VCLN), 1187-1210 (PADL…VKDK), and 1257-1282 (HRVI…DYRA). 2 positions are modified to phosphoserine: serine 1367 and serine 1376. 2 LRR repeats span residues 1579–1602 (QQEL…IQNH) and 1629–1653 (LTAL…TREA). Spectrin repeat units follow at residues 1816–1891 (ELQK…NFEE) and 1933–2041 (QYQQ…ALLQ). Phosphoserine is present on serine 1860. The stretch at 1869–1891 (KGDLRFVTISGQKVLETENNFEE) is one LRR 11 repeat. LRR repeat units follow at residues 2058 to 2083 (LQSM…LIQE) and 2194 to 2220 (IQEL…ALGS). The Spectrin 3 repeat unit spans residues 2399–2507 (RMEEVQKEAS…TVARQKQLEE (109 aa)). Phosphoserine is present on residues serine 2429 and serine 2454. LRR repeat units follow at residues 2444 to 2467 (KAFL…LAGL), 2534 to 2557 (GVLG…QFML), and 2702 to 2725 (KKRL…RMNR). Spectrin repeat units lie at residues 2733 to 2837 (TQQF…SRLK) and 2842 to 2945 (KAQK…SLEE). Phosphoserine occurs at positions 2769 and 2895. LRR repeat units follow at residues 2984–3009 (NKNL…YLRD), 3105–3127 (NKIQ…MLEE), and 3214–3237 (KEQV…LIQS). Spectrin repeat units lie at residues 3169–3274 (EDFY…QLQE), 3281–3383 (KFQD…QLED), 3388–3491 (AKQF…SLLE), 3714–3818 (RSQQ…ARLE), 3825–3927 (NQFW…ALDE), 4047–4152 (LAEK…KLED), 4157–4261 (AVQY…HKLE), 4267–4370 (LGQF…QQLQ), 4375–4481 (QAQG…KLEE), 4486–4589 (ATEF…RSLD), 4594–4700 (RAKQ…KLEE), 4707–4808 (QFMD…RLEQ), and 4812–4916 (QAEE…QRLE). A Phosphothreonine modification is found at threonine 3368. 2 LRR repeats span residues 3737 to 3761 (MALG…AFSI) and 3846 to 3870 (AQLP…QLRE). Serine 4074 is modified (phosphoserine). At lysine 4252 the chain carries N6-acetyllysine. An LRR 22 repeat occupies 4538–4561 (RDQIIELDQTGNQLKFLSQKQDVV). Residues 4993-5023 (PTHAPFIEKSRSGSRKSLNQPTPPPMPILSQ) are disordered. Serine 5009 carries the phosphoserine modification. EF-hand domains follow at residues 5083–5118 (HKKS…SKFP) and 5119–5154 (TTKL…NKDA). Residues aspartate 5096, aspartate 5098, aspartate 5100, lysine 5102, glutamate 5107, aspartate 5132, aspartate 5134, aspartate 5136, tyrosine 5138, and glutamate 5143 each coordinate Ca(2+). Residues 5159–5231 (TDADKIEDEV…EFLVKNDPCR (73 aa)) enclose the GAR domain. A C-terminal tail region spans residues 5159–5430 (TDADKIEDEV…ASPRTPCPKR (272 aa)). The disordered stretch occupies residues 5247-5430 (PEGASQGMTP…ASPRTPCPKR (184 aa)). The span at 5267-5301 (SSRAASPTRSSSSASQSNHSCTSMPSSPATPASGT) shows a compositional bias: low complexity. At threonine 5296 the chain carries Phosphothreonine. Residues 5317–5341 (TFHSSRTSLAGDTSNSSSPASTGAK) show a composition bias toward polar residues. Residues serine 5321 and serine 5334 each carry the phosphoserine modification. Low complexity predominate over residues 5352–5366 (SRPGSRAGSRAGSRA). A 4 X 4 AA tandem repeats of [GS]-S-R-[AR] region spans residues 5355 to 5370 (GSRAGSRAGSRASSRR). Serine 5372 and serine 5375 each carry phosphoserine. Over residues 5381 to 5391 (ETQSACSDTSE) the composition is skewed to polar residues. Low complexity predominate over residues 5392 to 5403 (SSAAGGQGSSRR).

The protein belongs to the plakin or cytolinker family. Interacts with MAPRE1, CLASP1, CLASP2 and GOLGA4. Interacts with AXIN1 and LRP6. Found in a complex composed of MACF1, APC; AXIN1, CTNNB1 and GSK3B. Interacts with CAMSAP3. Post-translationally, phosphorylated on serine residues in the C-terminal tail by GSK3B. Phosphorylation inhibits microtubule-binding and this plays a critical role in bulge stem cell migration and skin wound repair. Wnt-signaling can repress phosphorylation.

The protein resides in the cytoplasm. Its subcellular location is the cytoskeleton. It is found in the golgi apparatus. It localises to the cell membrane. The protein localises to the cell projection. The protein resides in the ruffle membrane. Its subcellular location is the membrane. Functionally, F-actin-binding protein which plays a role in cross-linking actin to other cytoskeletal proteins and also binds to microtubules. Plays an important role in ERBB2-dependent stabilization of microtubules at the cell cortex. Acts as a positive regulator of Wnt receptor signaling pathway and is involved in the translocation of AXIN1 and its associated complex (composed of APC, CTNNB1 and GSK3B) from the cytoplasm to the cell membrane. Has actin-regulated ATPase activity and is essential for controlling focal adhesions (FAs) assembly and dynamics. Interaction with CAMSAP3 at the minus ends of non-centrosomal microtubules tethers microtubules minus-ends to actin filaments, regulating focal adhesion size and cell migration. May play role in delivery of transport vesicles containing GPI-linked proteins from the trans-Golgi network through its interaction with GOLGA4. Plays a key role in wound healing and epidermal cell migration. Required for efficient upward migration of bulge cells in response to wounding and this function is primarily rooted in its ability to coordinate microtubule dynamics and polarize hair follicle stem cells. As a regulator of actin and microtubule arrangement and stabilization, it plays an essential role in neurite outgrowth, branching and spine formation during brain development. This is Microtubule-actin cross-linking factor 1 from Rattus norvegicus (Rat).